The primary structure comprises 184 residues: Acireductone dioxygenase 4 (184 aa).

Fe(2+)-binding residues include His-86, His-88, Glu-92, and His-131. His-86, His-88, Glu-92, and His-131 together coordinate Ni(2+).

It belongs to the acireductone dioxygenase (ARD) family. Fe(2+) serves as cofactor. It depends on Ni(2+) as a cofactor.

The protein localises to the cytoplasm. It localises to the nucleus. The catalysed reaction is 1,2-dihydroxy-5-(methylsulfanyl)pent-1-en-3-one + O2 = 4-methylsulfanyl-2-oxobutanoate + formate + 2 H(+). It carries out the reaction 1,2-dihydroxy-5-(methylsulfanyl)pent-1-en-3-one + O2 = 3-(methylsulfanyl)propanoate + CO + formate + 2 H(+). The protein operates within amino-acid biosynthesis; L-methionine biosynthesis via salvage pathway; L-methionine from S-methyl-5-thio-alpha-D-ribose 1-phosphate: step 5/6. Functionally, catalyzes 2 different reactions between oxygen and the acireductone 1,2-dihydroxy-3-keto-5-methylthiopentene (DHK-MTPene) depending upon the metal bound in the active site. Fe-containing acireductone dioxygenase (Fe-ARD) produces formate and 2-keto-4-methylthiobutyrate (KMTB), the alpha-ketoacid precursor of methionine in the methionine recycle pathway. Ni-containing acireductone dioxygenase (Ni-ARD) produces methylthiopropionate, carbon monoxide and formate, and does not lie on the methionine recycle pathway. The chain is Acireductone dioxygenase 4 (ARD4) from Oryza sativa subsp. japonica (Rice).